Consider the following 315-residue polypeptide: Zinc finger protein 691 (315 aa).

The span at 1-10 shows a compositional bias: polar residues; that stretch reads MSLCSPTHSA. Residues 1–90 form a disordered region; sequence MSLCSPTHSA…QETHPKKPWQ (90 aa). Positions 33-58 are enriched in basic and acidic residues; it reads GSEKEQSPEPHLPEEGEGGKPWRVDD. A phosphoserine mark is found at serine 39, serine 75, and serine 77. Lysine 113 participates in a covalent cross-link: Glycyl lysine isopeptide (Lys-Gly) (interchain with G-Cter in SUMO2). 7 C2H2-type zinc fingers span residues 115-137, 143-165, 171-193, 199-221, 227-249, 255-277, and 283-305; these read FICA…QRIH, YKCS…ERIH, YKCP…QQDH, YRCD…HRTH, YICC…HRTH, YECT…QRTH, and YRCT…QKTH.

The protein belongs to the krueppel C2H2-type zinc-finger protein family.

The protein resides in the nucleus. Functionally, may be involved in transcriptional regulation. The chain is Zinc finger protein 691 (ZNF691) from Homo sapiens (Human).